A 209-amino-acid polypeptide reads, in one-letter code: Uracil phosphoribosyltransferase (209 aa).

5-phospho-alpha-D-ribose 1-diphosphate is bound by residues arginine 79, arginine 104, and 131-139 (DPMLATGGS). Uracil-binding positions include isoleucine 194 and 199 to 201 (GDA). Aspartate 200 serves as a coordination point for 5-phospho-alpha-D-ribose 1-diphosphate.

Belongs to the UPRTase family. Requires Mg(2+) as cofactor.

It catalyses the reaction UMP + diphosphate = 5-phospho-alpha-D-ribose 1-diphosphate + uracil. The protein operates within pyrimidine metabolism; UMP biosynthesis via salvage pathway; UMP from uracil: step 1/1. Its activity is regulated as follows. Allosterically activated by GTP. Catalyzes the conversion of uracil and 5-phospho-alpha-D-ribose 1-diphosphate (PRPP) to UMP and diphosphate. The polypeptide is Uracil phosphoribosyltransferase (Lysinibacillus sphaericus (strain C3-41)).